The primary structure comprises 208 residues: Sodium/potassium-transporting ATPase subunit beta-1-interacting protein 4 (208 aa).

The next 3 membrane-spanning stretches (helical) occupy residues Ala-35–Ile-55, Val-62–Phe-82, and Cys-151–Phe-171.

The protein belongs to the NKAIN family. As to quaternary structure, interacts with ATP1B1.

The protein localises to the cell membrane. The polypeptide is Sodium/potassium-transporting ATPase subunit beta-1-interacting protein 4 (NKAIN4) (Homo sapiens (Human)).